A 219-amino-acid polypeptide reads, in one-letter code: ATP-dependent Clp protease proteolytic subunit 3 (219 aa).

Catalysis depends on Ser-112, which acts as the Nucleophile. The active site involves His-137.

The protein belongs to the peptidase S14 family. In terms of assembly, fourteen ClpP subunits assemble into 2 heptameric rings which stack back to back to give a disk-like structure with a central cavity, resembling the structure of eukaryotic proteasomes.

The protein localises to the cytoplasm. The enzyme catalyses Hydrolysis of proteins to small peptides in the presence of ATP and magnesium. alpha-casein is the usual test substrate. In the absence of ATP, only oligopeptides shorter than five residues are hydrolyzed (such as succinyl-Leu-Tyr-|-NHMec, and Leu-Tyr-Leu-|-Tyr-Trp, in which cleavage of the -Tyr-|-Leu- and -Tyr-|-Trp bonds also occurs).. Functionally, cleaves peptides in various proteins in a process that requires ATP hydrolysis. Has a chymotrypsin-like activity. Plays a major role in the degradation of misfolded proteins. This is ATP-dependent Clp protease proteolytic subunit 3 from Streptomyces avermitilis (strain ATCC 31267 / DSM 46492 / JCM 5070 / NBRC 14893 / NCIMB 12804 / NRRL 8165 / MA-4680).